The chain runs to 138 residues: Cysteine desulfuration protein SufE (138 aa).

Cys-51 serves as the catalytic Cysteine persulfide intermediate.

The protein belongs to the SufE family. Homodimer. Interacts with SufS.

Its subcellular location is the cytoplasm. Its pathway is cofactor biosynthesis; iron-sulfur cluster biosynthesis. In terms of biological role, participates in cysteine desulfuration mediated by SufS. Cysteine desulfuration mobilizes sulfur from L-cysteine to yield L-alanine and constitutes an essential step in sulfur metabolism for biosynthesis of a variety of sulfur-containing biomolecules. Functions as a sulfur acceptor for SufS, by mediating the direct transfer of the sulfur atom from the S-sulfanylcysteine of SufS, an intermediate product of cysteine desulfuration process. The protein is Cysteine desulfuration protein SufE of Escherichia coli O157:H7.